A 361-amino-acid polypeptide reads, in one-letter code: MLYNLLLPHIHNSHIANLFHYITFRSGLAIIITLSLSFIMGPILIKFLRSLQKNGQPIRSDGPESHQTKAGTPTMGGIMIILSSGLSTLLLADLTNQYIWITLFGFISFGIIGFMDDYAKVTKNNHYGVRGKSKLVLQGIISLIICVLLEYLDKNPSHLLNVPFFKNLNLDLGYFYIVFAIFVIVGSSNAVNLTDGLDGLATVPIAFTAGSFALISYLVGNLIYSHYLQLTYIPNTGELTVLCAGLVGSCLGFLWFNAQPAEVFMGDTGSLSLGGVLGIISVITKHEIVLAIVGGLFVIETASVILQVYYFKATQGKRIFKMAPLHHHFEKHGWAESKVVIRFWIISVIFALIGLSSLKLR.

10 helical membrane passes run 28–48 (LAII…IKFL), 74–94 (TMGG…LADL), 99–119 (IWIT…DDYA), 133–153 (SKLV…EYLD), 168–188 (LNLD…VGSS), 203–223 (VPIA…GNLI), 236–256 (TGEL…FLWF), 263–283 (VFMG…ISVI), 288–308 (IVLA…ILQV), and 338–358 (KVVI…LSSL).

Belongs to the glycosyltransferase 4 family. MraY subfamily. The cofactor is Mg(2+).

It localises to the cell inner membrane. It carries out the reaction UDP-N-acetyl-alpha-D-muramoyl-L-alanyl-gamma-D-glutamyl-meso-2,6-diaminopimeloyl-D-alanyl-D-alanine + di-trans,octa-cis-undecaprenyl phosphate = di-trans,octa-cis-undecaprenyl diphospho-N-acetyl-alpha-D-muramoyl-L-alanyl-D-glutamyl-meso-2,6-diaminopimeloyl-D-alanyl-D-alanine + UMP. It functions in the pathway cell wall biogenesis; peptidoglycan biosynthesis. Functionally, catalyzes the initial step of the lipid cycle reactions in the biosynthesis of the cell wall peptidoglycan: transfers peptidoglycan precursor phospho-MurNAc-pentapeptide from UDP-MurNAc-pentapeptide onto the lipid carrier undecaprenyl phosphate, yielding undecaprenyl-pyrophosphoryl-MurNAc-pentapeptide, known as lipid I. This is Phospho-N-acetylmuramoyl-pentapeptide-transferase from Rickettsia akari (strain Hartford).